Consider the following 27-residue polypeptide: Carcinustatin-20 (27 aa).

Leu-27 is modified (leucine amide).

It belongs to the allatostatin family.

The protein resides in the secreted. May act as a neurotransmitter or neuromodulator. The chain is Carcinustatin-20 from Carcinus maenas (Common shore crab).